We begin with the raw amino-acid sequence, 272 residues long: MLELEESSKIIEKIKYNKPLIHHITNYVSVNDCANIVLALGGSPIMADDPKEVVEVVSKASALVINIGTLNDKRVQSMLLAGRKANELGIPVILDPVGVGASTFRKDTVNQLLKNIDFTVIRGNASEMQVLMNMNYSVAGVDSMDFGGNTPKMIRTLAQKYKTTVAITGATDSICDGTTLISVSNGHSLLSQVTGTGCMTTSLIATCLAVTDQALLAALAGVLIMDLAGEGAYASLKAHESIGTFKVRIFDHIHQLTEQTILEGGSLDVSYR.

A substrate-binding site is contributed by Met46. Positions 122 and 168 each coordinate ATP. Gly195 is a binding site for substrate.

The protein belongs to the Thz kinase family. Mg(2+) serves as cofactor.

The enzyme catalyses 5-(2-hydroxyethyl)-4-methylthiazole + ATP = 4-methyl-5-(2-phosphooxyethyl)-thiazole + ADP + H(+). It participates in cofactor biosynthesis; thiamine diphosphate biosynthesis; 4-methyl-5-(2-phosphoethyl)-thiazole from 5-(2-hydroxyethyl)-4-methylthiazole: step 1/1. Its function is as follows. Catalyzes the phosphorylation of the hydroxyl group of 4-methyl-5-beta-hydroxyethylthiazole (THZ). This chain is Hydroxyethylthiazole kinase, found in Alkaliphilus metalliredigens (strain QYMF).